The primary structure comprises 205 residues: uncharacterized protein (205 aa).

A GST N-terminal domain is found at 1–82; the sequence is MIKVYGVPGW…MVLDRRPDLA (82 aa). Residues Val-53 and 66-67 each bind glutathione; that span reads ET. Residues 86–205 form the GST C-terminal domain; it reads GRAERQLFQR…QEVLKRNEII (120 aa).

This sequence belongs to the GST superfamily. Beta family.

This is an uncharacterized protein from Escherichia coli (strain K12).